The sequence spans 94 residues: Aspartyl/glutamyl-tRNA(Asn/Gln) amidotransferase subunit C (94 aa).

It belongs to the GatC family. As to quaternary structure, heterotrimer of A, B and C subunits.

The enzyme catalyses L-glutamyl-tRNA(Gln) + L-glutamine + ATP + H2O = L-glutaminyl-tRNA(Gln) + L-glutamate + ADP + phosphate + H(+). It catalyses the reaction L-aspartyl-tRNA(Asn) + L-glutamine + ATP + H2O = L-asparaginyl-tRNA(Asn) + L-glutamate + ADP + phosphate + 2 H(+). Allows the formation of correctly charged Asn-tRNA(Asn) or Gln-tRNA(Gln) through the transamidation of misacylated Asp-tRNA(Asn) or Glu-tRNA(Gln) in organisms which lack either or both of asparaginyl-tRNA or glutaminyl-tRNA synthetases. The reaction takes place in the presence of glutamine and ATP through an activated phospho-Asp-tRNA(Asn) or phospho-Glu-tRNA(Gln). The sequence is that of Aspartyl/glutamyl-tRNA(Asn/Gln) amidotransferase subunit C from Campylobacter jejuni subsp. jejuni serotype O:6 (strain 81116 / NCTC 11828).